The primary structure comprises 403 residues: Beta-galactoside alpha-2,6-sialyltransferase 1 (403 aa).

The Cytoplasmic portion of the chain corresponds to methionine 1–lysine 9. A helical; Signal-anchor for type II membrane protein membrane pass occupies residues phenylalanine 10–tryptophan 26. The Lumenal segment spans residues lysine 27–cysteine 403. 3 disulfide bridges follow: cysteine 139-cysteine 403, cysteine 181-cysteine 332, and cysteine 350-cysteine 361. N-linked (GlcNAc...) asparagine glycosylation is found at asparagine 146 and asparagine 158. Substrate-binding positions include serine 186, asparagine 209, asparagine 230, serine 319 to glycine 321, cysteine 350, tyrosine 351, threonine 362, tyrosine 366, histidine 367, and lysine 373. Tyrosine 366 bears the Phosphotyrosine mark.

The protein belongs to the glycosyltransferase 29 family. Monomer and homodimer. In terms of processing, N-glycosylated.

It localises to the golgi apparatus. It is found in the golgi stack membrane. The protein resides in the secreted. The enzyme catalyses a beta-D-galactoside + CMP-N-acetyl-beta-neuraminate = an N-acetyl-alpha-neuraminyl-(2-&gt;6)-beta-D-galactosyl derivative + CMP + H(+). It functions in the pathway protein modification; protein glycosylation. In terms of biological role, transfers sialic acid from CMP-sialic acid to galactose-containing acceptor substrates. This is Beta-galactoside alpha-2,6-sialyltransferase 1 (St6gal1) from Mus musculus (Mouse).